A 555-amino-acid chain; its full sequence is Urocanate hydratase (555 aa).

NAD(+)-binding positions include Gly-51–Gly-52, Gln-129, Gly-175–Gly-177, Glu-195, Gln-262–His-266, Tyr-272–Leu-273, and Tyr-321. The active site involves Cys-409. NAD(+) is bound at residue Gly-491.

It belongs to the urocanase family. NAD(+) serves as cofactor.

It localises to the cytoplasm. It catalyses the reaction 4-imidazolone-5-propanoate = trans-urocanate + H2O. It participates in amino-acid degradation; L-histidine degradation into L-glutamate; N-formimidoyl-L-glutamate from L-histidine: step 2/3. Its function is as follows. Catalyzes the conversion of urocanate to 4-imidazolone-5-propionate. The chain is Urocanate hydratase from Xanthomonas euvesicatoria pv. vesicatoria (strain 85-10) (Xanthomonas campestris pv. vesicatoria).